The following is a 74-amino-acid chain: uncharacterized protein (74 aa).

An N-terminal signal peptide occupies residues 1 to 19 (MIGLIVVPILFAIKGIVVG). Residues 26 to 74 (KFGKHSNTKDQKEDKDEDKRQSISQRKQHTEWPIEENRIQRRAPNQSAL) are disordered. Basic and acidic residues-rich tracts occupy residues 32–46 (NTKDQKEDKDEDKRQ) and 53–64 (QHTEWPIEENRI).

This is an uncharacterized protein from Saccharomyces cerevisiae (strain ATCC 204508 / S288c) (Baker's yeast).